A 730-amino-acid chain; its full sequence is Semaphorin-1A (730 aa).

The N-terminal stretch at 1–20 (MRAALVAVAALLWVALHAAA) is a signal peptide. Over 21-630 (WVNDVSPKMY…LPIYTAETLT (610 aa)) the chain is Extracellular. Residues 28–490 (KMYVQFGEER…SDDEILAIKL (463 aa)) enclose the Sema domain. N-linked (GlcNAc...) asparagine glycosylation is found at asparagine 44 and asparagine 71. Intrachain disulfides connect cysteine 97–cysteine 107 and cysteine 125–cysteine 134. Residues asparagine 163 and asparagine 267 are each glycosylated (N-linked (GlcNAc...) asparagine). Intrachain disulfides connect cysteine 244/cysteine 358 and cysteine 268/cysteine 317. N-linked (GlcNAc...) asparagine glycosylation is present at asparagine 360. Disulfide bonds link cysteine 493–cysteine 512 and cysteine 504–cysteine 521. Residue asparagine 539 is glycosylated (N-linked (GlcNAc...) asparagine). Residues 631–651 (IAIVTSCLGALVVGFISGFLF) traverse the membrane as a helical segment. At 652–730 (SRRCRGEDYT…PIQKVKKTYI (79 aa)) the chain is on the cytoplasmic side. Over residues 708–720 (ANGKNANSSAENK) the composition is skewed to low complexity. The tract at residues 708–730 (ANGKNANSSAENKPIQKVKKTYI) is disordered.

Belongs to the semaphorin family. As to expression, dynamically expressed on a subset of axon pathways in the developing CNS and on circumferential bands of epithelial cells in developing limb buds.

It is found in the membrane. In terms of biological role, plays a role in growth cones guidance. The polypeptide is Semaphorin-1A (SEMA-1A) (Schistocerca americana (American grasshopper)).